Consider the following 488-residue polypeptide: Aspartyl/glutamyl-tRNA(Asn/Gln) amidotransferase subunit B (488 aa).

This sequence belongs to the GatB/GatE family. GatB subfamily. As to quaternary structure, heterotrimer of A, B and C subunits.

It catalyses the reaction L-glutamyl-tRNA(Gln) + L-glutamine + ATP + H2O = L-glutaminyl-tRNA(Gln) + L-glutamate + ADP + phosphate + H(+). It carries out the reaction L-aspartyl-tRNA(Asn) + L-glutamine + ATP + H2O = L-asparaginyl-tRNA(Asn) + L-glutamate + ADP + phosphate + 2 H(+). Functionally, allows the formation of correctly charged Asn-tRNA(Asn) or Gln-tRNA(Gln) through the transamidation of misacylated Asp-tRNA(Asn) or Glu-tRNA(Gln) in organisms which lack either or both of asparaginyl-tRNA or glutaminyl-tRNA synthetases. The reaction takes place in the presence of glutamine and ATP through an activated phospho-Asp-tRNA(Asn) or phospho-Glu-tRNA(Gln). In Ralstonia nicotianae (strain ATCC BAA-1114 / GMI1000) (Ralstonia solanacearum), this protein is Aspartyl/glutamyl-tRNA(Asn/Gln) amidotransferase subunit B.